A 556-amino-acid chain; its full sequence is Glutamine--tRNA ligase (556 aa).

The 'HIGH' region signature appears at 34 to 44 (PEPNGYLHIGH). ATP contacts are provided by residues 35–37 (EPN) and 41–47 (HIGHAKS). Residues Asp67 and Tyr212 each coordinate L-glutamine. Residues Thr231, 261–262 (RL), and 269–271 (MSK) each bind ATP. The 'KMSKS' region motif lies at 268–272 (VMSKR).

This sequence belongs to the class-I aminoacyl-tRNA synthetase family. In terms of assembly, monomer.

The protein resides in the cytoplasm. The catalysed reaction is tRNA(Gln) + L-glutamine + ATP = L-glutaminyl-tRNA(Gln) + AMP + diphosphate. This is Glutamine--tRNA ligase from Vibrio parahaemolyticus serotype O3:K6 (strain RIMD 2210633).